The sequence spans 377 residues: Chaperone protein DnaJ (377 aa).

One can recognise a J domain in the interval 5–70 (DYYEVLGVGR…NKKAAYDQFG (66 aa)). A CR-type zinc finger spans residues 133 to 211 (GLTKELRIPT…CHGDGRVEKT (79 aa)). Zn(2+)-binding residues include Cys-146, Cys-149, Cys-163, Cys-166, Cys-185, Cys-188, Cys-199, and Cys-202. CXXCXGXG motif repeat units follow at residues 146–153 (CDVCDGSG), 163–170 (CGTCHGQG), 185–192 (CPTCHGRG), and 199–206 (CSKCHGDG).

It belongs to the DnaJ family. As to quaternary structure, homodimer. The cofactor is Zn(2+).

The protein resides in the cytoplasm. In terms of biological role, participates actively in the response to hyperosmotic and heat shock by preventing the aggregation of stress-denatured proteins and by disaggregating proteins, also in an autonomous, DnaK-independent fashion. Unfolded proteins bind initially to DnaJ; upon interaction with the DnaJ-bound protein, DnaK hydrolyzes its bound ATP, resulting in the formation of a stable complex. GrpE releases ADP from DnaK; ATP binding to DnaK triggers the release of the substrate protein, thus completing the reaction cycle. Several rounds of ATP-dependent interactions between DnaJ, DnaK and GrpE are required for fully efficient folding. Also involved, together with DnaK and GrpE, in the DNA replication of plasmids through activation of initiation proteins. The polypeptide is Chaperone protein DnaJ (Shewanella sp. (strain ANA-3)).